Consider the following 673-residue polypeptide: Annexin A6 (673 aa).

Position 2 is an N-acetylalanine (alanine 2). At serine 13 the chain carries Phosphoserine. 8 Annexin repeats span residues 20–91, 92–163, 175–247, 251–322, 363–434, 435–506, 521–595, and 599–670; these read FDAN…NLMR, PLAY…VLLQ, DLVQ…AVVK, STPE…KLCG, FNPD…GLMM, PPAH…SLAT, EDAQ…AIVQ, and NKPL…ALCG. Tyrosine 30 is subject to Phosphotyrosine. N6-acetyllysine occurs at positions 63, 68, 75, and 81. Residue tyrosine 201 is modified to Phosphotyrosine. Lysine 306, lysine 370, and lysine 418 each carry N6-acetyllysine. Phosphoserine is present on serine 422. Position 483 is an N6-acetyllysine (lysine 483). Phosphoserine is present on serine 537. The residue at position 620 (lysine 620) is an N6-acetyllysine.

It belongs to the annexin family.

The protein resides in the cytoplasm. It is found in the melanosome. In terms of biological role, may associate with CD21. May regulate the release of Ca(2+) from intracellular stores. The chain is Annexin A6 (Anxa6) from Rattus norvegicus (Rat).